The chain runs to 565 residues: Molybdenum cofactor biosynthesis protein 1 (565 aa).

The interval 3-367 (LLARHAIRLL…AVQRKKKQHA (365 aa)) is molybdenum cofactor biosynthesis protein A. The Radical SAM core domain maps to 64-276 (SFGRHHTYLR…LQIIRQRWPD (213 aa)). A GTP-binding site is contributed by Arg73. Positions 80 and 84 each coordinate [4Fe-4S] cluster. Residue Tyr86 participates in S-adenosyl-L-methionine binding. Residue Cys87 participates in [4Fe-4S] cluster binding. Arg123 contributes to the GTP binding site. Residue Gly127 coordinates S-adenosyl-L-methionine. Thr154 provides a ligand contact to GTP. Position 178 (Ser178) interacts with S-adenosyl-L-methionine. Lys214 lines the GTP pocket. Met248 provides a ligand contact to S-adenosyl-L-methionine. The [4Fe-4S] cluster site is built by Cys311 and Cys314. 316–318 (RLR) serves as a coordination point for GTP. Cys328 provides a ligand contact to [4Fe-4S] cluster. The active-site For molybdenum cofactor biosynthesis protein C activity is Asp525.

This sequence in the C-terminal section; belongs to the MoaC family. In the N-terminal section; belongs to the radical SAM superfamily. MoaA family. As to quaternary structure, isoform Mocs1a and isoform Mocs1b probably form a heterooligomer. [4Fe-4S] cluster is required as a cofactor.

The catalysed reaction is GTP + AH2 + S-adenosyl-L-methionine = (8S)-3',8-cyclo-7,8-dihydroguanosine 5'-triphosphate + 5'-deoxyadenosine + L-methionine + A + H(+). The enzyme catalyses (8S)-3',8-cyclo-7,8-dihydroguanosine 5'-triphosphate = cyclic pyranopterin phosphate + diphosphate. It participates in cofactor biosynthesis; molybdopterin biosynthesis. Functionally, isoform Mocs1a and isoform Mocs1b probably form a complex that catalyzes the conversion of 5'-GTP to cyclic pyranopterin monophosphate (cPMP). Mocs1a catalyzes the cyclization of GTP to (8S)-3',8-cyclo-7,8-dihydroguanosine 5'-triphosphate and Mocs1b catalyzes the subsequent conversion of (8S)-3',8-cyclo-7,8-dihydroguanosine 5'-triphosphate to cPMP. This Drosophila melanogaster (Fruit fly) protein is Molybdenum cofactor biosynthesis protein 1 (Mocs1).